Here is a 206-residue protein sequence, read N- to C-terminus: Protein GrpE (206 aa).

A disordered region spans residues 1–64; the sequence is MSKKASMHKE…KALEEAQQQA (64 aa). Residues 46-58 show a composition bias toward basic and acidic residues; that stretch reads SDAKVQELEKALE.

This sequence belongs to the GrpE family. As to quaternary structure, homodimer.

It is found in the cytoplasm. Its function is as follows. Participates actively in the response to hyperosmotic and heat shock by preventing the aggregation of stress-denatured proteins, in association with DnaK and GrpE. It is the nucleotide exchange factor for DnaK and may function as a thermosensor. Unfolded proteins bind initially to DnaJ; upon interaction with the DnaJ-bound protein, DnaK hydrolyzes its bound ATP, resulting in the formation of a stable complex. GrpE releases ADP from DnaK; ATP binding to DnaK triggers the release of the substrate protein, thus completing the reaction cycle. Several rounds of ATP-dependent interactions between DnaJ, DnaK and GrpE are required for fully efficient folding. This chain is Protein GrpE, found in Prosthecochloris aestuarii (strain DSM 271 / SK 413).